Consider the following 356-residue polypeptide: Tyrosine recombinase XerS (356 aa).

A Core-binding (CB) domain is found at Leu16–Thr121. One can recognise a Tyr recombinase domain in the interval Gly169–Asp354. Active-site residues include Arg210, Lys234, His306, Arg309, and His332. Tyr341 functions as the O-(3'-phospho-DNA)-tyrosine intermediate in the catalytic mechanism.

This sequence belongs to the 'phage' integrase family. XerS subfamily.

It is found in the cytoplasm. Its activity is regulated as follows. FtsK is required for recombination. In terms of biological role, site-specific tyrosine recombinase, which acts by catalyzing the cutting and rejoining of the recombining DNA molecules. Essential to convert dimers of the bacterial chromosome into monomers to permit their segregation at cell division. The polypeptide is Tyrosine recombinase XerS (Streptococcus pneumoniae serotype 4 (strain ATCC BAA-334 / TIGR4)).